A 147-amino-acid polypeptide reads, in one-letter code: Allograft inflammatory factor 1 (147 aa).

Serine 2 bears the N-acetylserine mark. Lysine 11 is subject to N6-acetyllysine. The residue at position 39 (serine 39) is a Phosphoserine. 2 consecutive EF-hand domains span residues 45 to 80 and 81 to 115; these read SKLE…LGVP and KTHL…GKRS. Ca(2+) is bound by residues aspartate 58, asparagine 60, asparagine 62, aspartate 64, threonine 100, and aspartate 105. The segment at 128-147 is disordered; it reads AREKEKPTGPPAKKAISELP.

In terms of assembly, homodimer (Potential). Monomer. Interacts with LCP1. In terms of processing, phosphorylated on serine residues.

It localises to the cytoplasm. It is found in the cytoskeleton. The protein localises to the cell projection. The protein resides in the ruffle membrane. Its subcellular location is the phagocytic cup. Actin-binding protein that enhances membrane ruffling and RAC activation. Enhances the actin-bundling activity of LCP1. Binds calcium. Plays a role in RAC signaling and in phagocytosis. May play a role in macrophage activation and function. Promotes the proliferation of vascular smooth muscle cells and of T-lymphocytes. Enhances lymphocyte migration. Plays a role in vascular inflammation. This Macaca mulatta (Rhesus macaque) protein is Allograft inflammatory factor 1 (AIF1).